The following is a 147-amino-acid chain: Protein phosphatase 1 regulatory subunit 14A (147 aa).

Over residues 1-11 the composition is skewed to basic residues; that stretch reads MAAQRLGKRVL. The interval 1-36 is disordered; that stretch reads MAAQRLGKRVLSKLQSPSRARGPGGSPSGLQKRHAR. Ser-26 bears the Phosphoserine mark. The tract at residues 35 to 120 is inhibitory; that stretch reads ARVTVKYDRR…LLAKLRGLHK (86 aa). A Phosphothreonine; by PKC modification is found at Thr-38. The interval 118 to 147 is disordered; sequence LHKQPGFPQPSPSDDPSLSPRQDRAHTAPP. 3 positions are modified to phosphoserine: Ser-128, Ser-134, and Ser-136. A compositionally biased stretch (basic and acidic residues) spans 138–147; that stretch reads RQDRAHTAPP.

The protein belongs to the PP1 inhibitor family.

It is found in the cytoplasm. Functionally, inhibitor of PPP1CA. Has over 1000-fold higher inhibitory activity when phosphorylated, creating a molecular switch for regulating the phosphorylation status of PPP1CA substrates and smooth muscle contraction. In Mus musculus (Mouse), this protein is Protein phosphatase 1 regulatory subunit 14A (Ppp1r14a).